The chain runs to 341 residues: Putative casein kinase I C03C10.2 (341 aa).

Residues 50–326 (WSIEGVIGNG…KCLYSPKSLL (277 aa)) enclose the Protein kinase domain. Residues 56-64 (IGNGGYGQI) and Lys-79 contribute to the ATP site. Catalysis depends on Asp-173, which acts as the Proton acceptor.

Belongs to the protein kinase superfamily. CK1 Ser/Thr protein kinase family. Casein kinase I subfamily.

The enzyme catalyses L-seryl-[protein] + ATP = O-phospho-L-seryl-[protein] + ADP + H(+). It carries out the reaction L-threonyl-[protein] + ATP = O-phospho-L-threonyl-[protein] + ADP + H(+). The polypeptide is Putative casein kinase I C03C10.2 (Caenorhabditis elegans).